We begin with the raw amino-acid sequence, 535 residues long: Protein translocase subunit SecD (535 aa).

6 helical membrane-spanning segments follow: residues L5–G25, A377–I397, S402–L421, G425–F444, W469–F489, and G496–S516.

This sequence belongs to the SecD/SecF family. SecD subfamily. In terms of assembly, forms a complex with SecF. Part of the essential Sec protein translocation apparatus which comprises SecA, SecYEG and auxiliary proteins SecDF. Other proteins may also be involved.

The protein localises to the cell inner membrane. In terms of biological role, part of the Sec protein translocase complex. Interacts with the SecYEG preprotein conducting channel. SecDF uses the proton motive force (PMF) to complete protein translocation after the ATP-dependent function of SecA. This chain is Protein translocase subunit SecD, found in Koribacter versatilis (strain Ellin345).